Consider the following 34-residue polypeptide: Small, acid-soluble spore protein M (34 aa).

Basic residues predominate over residues 1-10 (MKTRPKKAGQ). A disordered region spans residues 1–34 (MKTRPKKAGQQKKTESKAIDSLDKKLGGPNRPST). The span at 12 to 26 (KKTESKAIDSLDKKL) shows a compositional bias: basic and acidic residues.

Its subcellular location is the spore core. In Bacillus subtilis (strain 168), this protein is Small, acid-soluble spore protein M (sspM).